A 467-amino-acid chain; its full sequence is 55 kDa erythrocyte membrane protein (467 aa).

Positions 73 to 154 constitute a PDZ domain; the sequence is EVAFEKNQSE…VVTMKIIPRP (82 aa). In terms of domain architecture, SH3 spans 160–230; the sequence is PCEMYMRGQF…PSPELQEWRA (71 aa). A Guanylate kinase-like domain is found at 283–452; the sequence is RKTLVLIGAP…SVKIVEEALE (170 aa).

Belongs to the MAGUK family. In terms of processing, extensively palmitoylated.

The protein localises to the membrane. In terms of biological role, may play a role in the regulation of neutrophil polarization. The protein is 55 kDa erythrocyte membrane protein (mpp1) of Takifugu rubripes (Japanese pufferfish).